Consider the following 439-residue polypeptide: FAD-linked oxidoreductase phmC (439 aa).

Positions 1-19 are cleaved as a signal peptide; sequence MLSSILLTIFCAFLSSTGA. N-linked (GlcNAc...) asparagine glycosylation is found at N29 and N84. An FAD-binding PCMH-type domain is found at 89-272; it reads QGSVPSYYIQ…LSTTTRVEPK (184 aa). 2 N-linked (GlcNAc...) asparagine glycosylation sites follow: N285 and N300.

It belongs to the oxygen-dependent FAD-linked oxidoreductase family. FAD serves as cofactor.

Its pathway is mycotoxin biosynthesis. FAD-linked oxidoreductase; part of the gene cluster that mediates the biosynthesis of the mycotoxins phomacins, leucine-derived cytochalasans with potent actin polymerization-inhibitory activities and monocot-specific antigerminative activities. The first step in the pathway is catalyzed by the hybrid PKS-NRPS phmA, assisted by the enoyl reductase phmE, that are responsible for fusion of the leucine precursor and the polyketide backbone to produce a 2-pyrrolidone intermediate. The polyketide synthase module (PKS) of phmA is responsible for the synthesis of the polyketide backbone and the downstream nonribosomal peptide synthetase (NRPS) amidates the carboxyl end of the polyketide with the leucine precursor. Because phmA lacks a designated enoylreductase (ER) domain, the required activity is provided the enoyl reductase phmE. Reduction by the hydrolyase phmG, followed by dehydration and intra-molecular Diels-Alder cyclization by the Diels-Alderase phmD then yield the required isoindolone-fused macrocycle. A number of oxidative steps catalyzed by the tailoring cytochrome P450 monooxygenase phmB, the FAD-linked oxidoreductase phmC and the short-chain dehydrogenase/reductase phmF, are further required to afford the final products, phomacin D and phomacin E. This Phaeosphaeria nodorum (strain SN15 / ATCC MYA-4574 / FGSC 10173) (Glume blotch fungus) protein is FAD-linked oxidoreductase phmC.